A 140-amino-acid chain; its full sequence is Acyl-coenzyme A thioesterase 13 (140 aa).

Met-1 bears the N-acetylmethionine mark. N6-acetyllysine occurs at positions 27, 37, and 43. Glu-46 is a CoA binding site. Residues Asn-50 and Gly-81 each coordinate substrate. CoA is bound by residues Ser-83, 90–95, and 108–113; these read YMSPAK and KQGKTL. 2 positions are modified to N6-acetyllysine: Lys-108 and Lys-127. Residue His-137 coordinates CoA.

The protein belongs to the thioesterase PaaI family. In terms of assembly, homotetramer. Interacts with PCTP. As to expression, highly expressed in the kidney and moderately in the heart, liver, brain, small and large intestine. Also expressed in brown adipose tissue.

Its subcellular location is the cytoplasm. The protein resides in the cytosol. The protein localises to the mitochondrion. It localises to the nucleus. It is found in the cytoskeleton. Its subcellular location is the spindle. It catalyses the reaction a fatty acyl-CoA + H2O = a fatty acid + CoA + H(+). The enzyme catalyses decanoyl-CoA + H2O = decanoate + CoA + H(+). It carries out the reaction octanoyl-CoA + H2O = octanoate + CoA + H(+). The catalysed reaction is butanoyl-CoA + H2O = butanoate + CoA + H(+). It catalyses the reaction hexanoyl-CoA + H2O = hexanoate + CoA + H(+). The enzyme catalyses tetradecanoyl-CoA + H2O = tetradecanoate + CoA + H(+). It carries out the reaction hexadecanoyl-CoA + H2O = hexadecanoate + CoA + H(+). The catalysed reaction is dodecanoyl-CoA + H2O = dodecanoate + CoA + H(+). It catalyses the reaction (9Z)-octadecenoyl-CoA + H2O = (9Z)-octadecenoate + CoA + H(+). Its function is as follows. Catalyzes the hydrolysis of acyl-CoAs into free fatty acids and coenzyme A (CoASH), regulating their respective intracellular levels. Has acyl-CoA thioesterase activity towards medium (C12) and long-chain (C18) fatty acyl-CoA substrates. Can also hydrolyze 3-hydroxyphenylacetyl-CoA and 3,4-dihydroxyphenylacetyl-CoA (in vitro). May play a role in controlling adaptive thermogenesis. This chain is Acyl-coenzyme A thioesterase 13, found in Mus musculus (Mouse).